A 230-amino-acid chain; its full sequence is uncharacterized protein (230 aa).

An N-terminal signal peptide occupies residues 1–21; that stretch reads MARYDARLRGIGKAHACSAFA. Positions 47–190 are disordered; it reads SASVQENFIA…TVQTSSSGDP (144 aa). A compositionally biased stretch (polar residues) spans 141-150; that stretch reads PQSQTSANSQ. The segment covering 151–165 has biased composition (basic and acidic residues); sequence KKPEIRCRERSKNAR. Residues 173-188 are compositionally biased toward polar residues; it reads AVATNEAETVQTSSSG.

This sequence to R.meliloti RA0936 and y4aO.

This is an uncharacterized protein from Sinorhizobium fredii (strain NBRC 101917 / NGR234).